The primary structure comprises 874 residues: Alanine--tRNA ligase (874 aa).

Residues His559, His563, Cys661, and His665 each coordinate Zn(2+).

This sequence belongs to the class-II aminoacyl-tRNA synthetase family. Zn(2+) serves as cofactor.

The protein resides in the cytoplasm. It catalyses the reaction tRNA(Ala) + L-alanine + ATP = L-alanyl-tRNA(Ala) + AMP + diphosphate. In terms of biological role, catalyzes the attachment of alanine to tRNA(Ala) in a two-step reaction: alanine is first activated by ATP to form Ala-AMP and then transferred to the acceptor end of tRNA(Ala). Also edits incorrectly charged Ser-tRNA(Ala) and Gly-tRNA(Ala) via its editing domain. The sequence is that of Alanine--tRNA ligase from Microcystis aeruginosa (strain NIES-843 / IAM M-2473).